The sequence spans 147 residues: Nucleoside diphosphate kinase (147 aa).

Positions 9, 57, 85, 91, 102, and 112 each coordinate ATP. The active-site Pros-phosphohistidine intermediate is histidine 115.

Belongs to the NDK family. Mg(2+) serves as cofactor.

It localises to the cytoplasm. The catalysed reaction is a 2'-deoxyribonucleoside 5'-diphosphate + ATP = a 2'-deoxyribonucleoside 5'-triphosphate + ADP. It carries out the reaction a ribonucleoside 5'-diphosphate + ATP = a ribonucleoside 5'-triphosphate + ADP. Its function is as follows. Major role in the synthesis of nucleoside triphosphates other than ATP. The ATP gamma phosphate is transferred to the NDP beta phosphate via a ping-pong mechanism, using a phosphorylated active-site intermediate. This Ignicoccus hospitalis (strain KIN4/I / DSM 18386 / JCM 14125) protein is Nucleoside diphosphate kinase.